Consider the following 202-residue polypeptide: Ribonuclease HII (202 aa).

Residues 12 to 201 (LLIAGVDEAG…VRQLKLFIPE (190 aa)) form the RNase H type-2 domain. Residues Asp-18, Glu-19, and Asp-110 each contribute to the a divalent metal cation site.

This sequence belongs to the RNase HII family. Requires Mn(2+) as cofactor. It depends on Mg(2+) as a cofactor.

It is found in the cytoplasm. It carries out the reaction Endonucleolytic cleavage to 5'-phosphomonoester.. Its function is as follows. Endonuclease that specifically degrades the RNA of RNA-DNA hybrids. This chain is Ribonuclease HII, found in Coxiella burnetii (strain CbuG_Q212) (Coxiella burnetii (strain Q212)).